The chain runs to 217 residues: 3,4-dihydroxy-2-butanone 4-phosphate synthase (217 aa).

D-ribulose 5-phosphate is bound by residues 37–38 (RE), Asp42, 150–154 (RRGHT), and Glu174. Glu38 serves as a coordination point for Mg(2+). Mg(2+) is bound at residue His153.

It belongs to the DHBP synthase family. In terms of assembly, homodimer. It depends on Mg(2+) as a cofactor. Mn(2+) serves as cofactor.

The enzyme catalyses D-ribulose 5-phosphate = (2S)-2-hydroxy-3-oxobutyl phosphate + formate + H(+). It participates in cofactor biosynthesis; riboflavin biosynthesis; 2-hydroxy-3-oxobutyl phosphate from D-ribulose 5-phosphate: step 1/1. Its function is as follows. Catalyzes the conversion of D-ribulose 5-phosphate to formate and 3,4-dihydroxy-2-butanone 4-phosphate. The chain is 3,4-dihydroxy-2-butanone 4-phosphate synthase from Serratia proteamaculans (strain 568).